The primary structure comprises 403 residues: 4-hydroxy-3-methylbut-2-enyl diphosphate reductase (403 aa).

Cys66 is a binding site for [4Fe-4S] cluster. A (2E)-4-hydroxy-3-methylbut-2-enyl diphosphate-binding site is contributed by His96. His96 contributes to the dimethylallyl diphosphate binding site. An isopentenyl diphosphate-binding site is contributed by His96. Residue Cys157 coordinates [4Fe-4S] cluster. His185 is a binding site for (2E)-4-hydroxy-3-methylbut-2-enyl diphosphate. His185 serves as a coordination point for dimethylallyl diphosphate. Residue His185 coordinates isopentenyl diphosphate. Residue Glu187 is the Proton donor of the active site. Thr250 lines the (2E)-4-hydroxy-3-methylbut-2-enyl diphosphate pocket. Cys288 is a [4Fe-4S] cluster binding site. The (2E)-4-hydroxy-3-methylbut-2-enyl diphosphate site is built by Ser317, Ser318, Asn319, and Ser379. Dimethylallyl diphosphate is bound by residues Ser317, Ser318, Asn319, and Ser379. Residues Ser317, Ser318, Asn319, and Ser379 each coordinate isopentenyl diphosphate.

It belongs to the IspH family. It depends on [4Fe-4S] cluster as a cofactor.

The enzyme catalyses isopentenyl diphosphate + 2 oxidized [2Fe-2S]-[ferredoxin] + H2O = (2E)-4-hydroxy-3-methylbut-2-enyl diphosphate + 2 reduced [2Fe-2S]-[ferredoxin] + 2 H(+). It catalyses the reaction dimethylallyl diphosphate + 2 oxidized [2Fe-2S]-[ferredoxin] + H2O = (2E)-4-hydroxy-3-methylbut-2-enyl diphosphate + 2 reduced [2Fe-2S]-[ferredoxin] + 2 H(+). It participates in isoprenoid biosynthesis; dimethylallyl diphosphate biosynthesis; dimethylallyl diphosphate from (2E)-4-hydroxy-3-methylbutenyl diphosphate: step 1/1. The protein operates within isoprenoid biosynthesis; isopentenyl diphosphate biosynthesis via DXP pathway; isopentenyl diphosphate from 1-deoxy-D-xylulose 5-phosphate: step 6/6. Catalyzes the conversion of 1-hydroxy-2-methyl-2-(E)-butenyl 4-diphosphate (HMBPP) into a mixture of isopentenyl diphosphate (IPP) and dimethylallyl diphosphate (DMAPP). Acts in the terminal step of the DOXP/MEP pathway for isoprenoid precursor biosynthesis. The sequence is that of 4-hydroxy-3-methylbut-2-enyl diphosphate reductase from Rippkaea orientalis (strain PCC 8801 / RF-1) (Cyanothece sp. (strain PCC 8801)).